The following is a 29-amino-acid chain: MLIGEAVLAVVTVAVVAYLTYVMMYPTRF.

The helical transmembrane segment at 2–22 threads the bilayer; it reads LIGEAVLAVVTVAVVAYLTYV.

Belongs to the KdpF family. In terms of assembly, the system is composed of three essential subunits: KdpA, KdpB and KdpC. The complex also contains KdpF, a small non-essential subunit.

The protein resides in the cell membrane. Functionally, part of the high-affinity ATP-driven potassium transport (or Kdp) system, which catalyzes the hydrolysis of ATP coupled with the electrogenic transport of potassium into the cytoplasm. This subunit may be involved in stabilization of the complex. The Kdp system is essential for growth under K(+) limitation, and for survival under desiccation and salt crystal inclusion. The sequence is that of Potassium-transporting ATPase KdpF subunit from Halobacterium salinarum (strain ATCC 29341 / DSM 671 / R1).